Reading from the N-terminus, the 144-residue chain is Putative pre-16S rRNA nuclease (144 aa).

Belongs to the YqgF nuclease family.

It localises to the cytoplasm. Functionally, could be a nuclease involved in processing of the 5'-end of pre-16S rRNA. In Oleidesulfovibrio alaskensis (strain ATCC BAA-1058 / DSM 17464 / G20) (Desulfovibrio alaskensis), this protein is Putative pre-16S rRNA nuclease.